Reading from the N-terminus, the 248-residue chain is Probable transcriptional regulatory protein PSPA7_4544 (248 aa).

It belongs to the TACO1 family.

It localises to the cytoplasm. The chain is Probable transcriptional regulatory protein PSPA7_4544 from Pseudomonas paraeruginosa (strain DSM 24068 / PA7) (Pseudomonas aeruginosa (strain PA7)).